The following is a 655-amino-acid chain: MLYPQEFDVIVVGGGHAGTEAALAAARMGSRTLLLTHNIETLGQMSCNPSIGGIGKGHLVKEVDALGGAMALATDEGGIQFRILNSSKGPAVRATRAQADRILYKAAIRRMLENQPNLWLFQQAVDDLMVEGDRVVGAITQVGIRFRARTVVLTAGTFLDGKIHVGLNNYSAGRAGDPPAVSLSARLKELQLPQGRLKTGTPPRIDGRSIDFSQCEEQPGDGMPGGVNEGTLPVFSFMGSTAMHPRQVPCWITHTNERTHEIIRSGFDRSPMFTGKIEGVGPRYCPSVEDKINRFADKDSHQIFLEPEGLTTHEFYPNGISTSLPFDVQYDLVRSMRGLENAHILRPGYAIEYDYFDPRSLKSNFETRQIQGLFFAGQINGTTGYEEAAAQGLFAGINAALQCRGESAWLPRRDEAYLGVLVNDLITKGVTEPYRMFTSRAEFRLQLREDNADMRLTEAGRRMGLVDDARWDAFSRKRDAVARETERLKSTWVNPRNLPAEESARVLGKSIEHEYNLFDLLRRPDVTYDALTGMDGGKYASTAVSRETLGELSAPVIEQVEIAAKYAGYIDRQKDEVQRAFYYENLQLPQELDYMQVAALSIEVRQKLQKHRPETLGQASRISGVTPAAVSLLLVHLKKGGFRGFTAQQADEVAA.

13-18 serves as a coordination point for FAD; the sequence is GGGHAG. Position 281–295 (281–295) interacts with NAD(+); that stretch reads GPRYCPSVEDKINRF.

This sequence belongs to the MnmG family. Homodimer. Heterotetramer of two MnmE and two MnmG subunits. Requires FAD as cofactor.

It is found in the cytoplasm. NAD-binding protein involved in the addition of a carboxymethylaminomethyl (cmnm) group at the wobble position (U34) of certain tRNAs, forming tRNA-cmnm(5)s(2)U34. The chain is tRNA uridine 5-carboxymethylaminomethyl modification enzyme MnmG from Paracidovorax citrulli (strain AAC00-1) (Acidovorax citrulli).